Consider the following 301-residue polypeptide: MASSAKRRAVETGQNPQDSDESSDEGLEDSGDDDSENSEEEVNEEVIVDFEAHTISDNDFHGIKTLLQQLFLKCHVNTSDLTDIIIQQNHIGSVIRQAEVPEDSDDEGDPDEVFGFISMVNLTERQGVECLEKLKDMILDQCVKCSTPDGQERMENLLQGNAQSVGLLLSERFVNVPPQIALPLHKQLQKEMAEAQRTNKPSGKCQFCLMISKTCKPLKKKSISAGDQAKDELLFVNDEEECFYEQATVKFSYCVQDEADSCATGKWSYDDEPMKPFRTVMVIPMDRMDTIMQKMTDYLTV.

Positions 1 to 43 (MASSAKRRAVETGQNPQDSDESSDEGLEDSGDDDSENSEEEVN) are disordered. Over residues 18–43 (DSDESSDEGLEDSGDDDSENSEEEVN) the composition is skewed to acidic residues.

The protein belongs to the BCP1 family.

The protein localises to the nucleus. Its subcellular location is the cytoplasm. It is found in the cytoskeleton. The protein resides in the microtubule organizing center. It localises to the centrosome. The protein localises to the centriole. Its subcellular location is the spindle pole. Its function is as follows. During interphase, required for microtubule organizing and anchoring activities. During mitosis, required for the organization and stabilization of the spindle pole. May promote cell cycle arrest and DNA repair. The chain is Protein BCCIP homolog (bccip) from Danio rerio (Zebrafish).